The following is a 394-amino-acid chain: 8-amino-7-oxononanoate synthase (394 aa).

Arg18 is a binding site for substrate. 105 to 106 (GY) provides a ligand contact to pyridoxal 5'-phosphate. His130 contributes to the substrate binding site. Residues Ser175, His203, and Thr232 each coordinate pyridoxal 5'-phosphate. Position 235 is an N6-(pyridoxal phosphate)lysine (Lys235). Thr349 is a binding site for substrate.

The protein belongs to the class-II pyridoxal-phosphate-dependent aminotransferase family. BioF subfamily. As to quaternary structure, homodimer. The cofactor is pyridoxal 5'-phosphate.

It catalyses the reaction 6-carboxyhexanoyl-[ACP] + L-alanine + H(+) = (8S)-8-amino-7-oxononanoate + holo-[ACP] + CO2. It participates in cofactor biosynthesis; biotin biosynthesis. In terms of biological role, catalyzes the decarboxylative condensation of pimeloyl-[acyl-carrier protein] and L-alanine to produce 8-amino-7-oxononanoate (AON), [acyl-carrier protein], and carbon dioxide. The chain is 8-amino-7-oxononanoate synthase from Marinobacter nauticus (strain ATCC 700491 / DSM 11845 / VT8) (Marinobacter aquaeolei).